We begin with the raw amino-acid sequence, 180 residues long: Putative protein 33K (180 aa).

The disordered stretch occupies residues 31–108 (LEEAYKQLEK…AKAPRNYGTP (78 aa)). Residues 33–43 (EAYKQLEKELG) show a composition bias toward basic and acidic residues. Residues 60–78 (PLSEGELEEISEEEEEEGE) show a composition bias toward acidic residues.

The chain is Putative protein 33K from Pantherophis guttatus (Corn snake).